Here is a 267-residue protein sequence, read N- to C-terminus: Short-chain dehydrogenase/reductase GME11361 (267 aa).

Ile-10, Thr-36, Lys-42, Asp-57, Asn-80, Tyr-129, Lys-133, Val-162, and Ser-164 together coordinate NADP(+). Residue Tyr-129 is the Proton acceptor of the active site. Catalysis depends on Lys-133, which acts as the Lowers pKa of active site Tyr.

It belongs to the short-chain dehydrogenases/reductases (SDR) family.

The protein operates within secondary metabolite biosynthesis. Short-chain dehydrogenase/reductase; part of the gene cluster that mediates the biosynthesis of dibenzodioxocinones such as pestalotiollide B, a novel class of inhibitors against cholesterol ester transfer protein (CEPT). The biosynthesis initiates from condensation of acetate and malonate units catalyzed by the non-reducing PKS pks8/GME11356. Pks8/GME11356 lacks a thioesterase (TE) domain, which is important to the cyclizing of the third ring of atrochrysone carboxylic acid, and the esterase GME11355 might play the role of TE and catalyzes the cyclization reaction of the C ring. The lactamase-like protein GME11357 (or other beta-lactamases in Pestalotiopsis microspora) probably hydrolyzes the thioester bond between the ACP of pks8/GME11356 and the intermediate to release atrochrysone carboxylic acid, which is spontaneously dehydrates to form endocrocin anthrone. Endocrocin anthrone is further converted to emodin via the endocrocin intermediate. Emodin is then oxidized by several enzymes such as the Baeyer-Villiger oxidase GME11358, the oxidoreductase GME11367, the short chain dehydrogenase/reductase GME11373, as well as by other oxidoreductases from the cluster, to modify the A and C rings and open the B ring, and finally yield monodictyphenone. The prenyltransferase GME11375 may catalyze the addition reaction between the C5 side chains and the carbon bone of dibenzodioxocinones. The remaining biochemical reactions to the final product dibenzodioxocinones should be methylation catalyzed by methyltransferase GME11366 and reduction and lactonization reaction catalyzed by a series of oxidordeuctases. The chain is Short-chain dehydrogenase/reductase GME11361 from Pestalotiopsis microspora.